Here is a 666-residue protein sequence, read N- to C-terminus: Endogenous retrovirus group K member 10 Gag polyprotein (666 aa).

Residue Gly2 is the site of N-myristoyl glycine attachment. The disordered stretch occupies residues 164–183; sequence EGKGPELMGPSESKPRGTSP. CCHC-type zinc fingers lie at residues 544–561 and 580–597; these read GKCYNCGQIGHLKKNCPV and DLCPRCKKGKHWASQCRS. The interval 598 to 642 is disordered; that stretch reads KFDKNGQPLSGNEQRGQPQAPQQTGAFPIQPFVPQGFQGQQPPLS. Polar residues predominate over residues 604–622; it reads QPLSGNEQRGQPQAPQQTG. A compositionally biased stretch (low complexity) spans 624-640; it reads FPIQPFVPQGFQGQQPP.

It belongs to the beta type-B retroviral Gag protein family. HERV class-II K(HML-2) gag subfamily. Myristoylation is essential for retroviral assembly. Alteration of the glycine residue leads to a block in the budding of particles and an accumulation of Gag inside the cell. In terms of processing, specific enzymatic cleavages may yield mature proteins.

Its subcellular location is the cell membrane. Functionally, the products of the Gag polyproteins of infectious retroviruses perform highly complex orchestrated tasks during the assembly, budding, maturation, and infection stages of the viral replication cycle. During viral assembly, the proteins form membrane associations and self-associations that ultimately result in budding of an immature virion from the infected cell. Gag precursors also function during viral assembly to selectively bind and package two plus strands of genomic RNA. Endogenous Gag proteins may have kept, lost or modified their original function during evolution. This chain is Endogenous retrovirus group K member 10 Gag polyprotein (ERVK-10), found in Homo sapiens (Human).